The chain runs to 58 residues: uncharacterized protein (58 aa).

This is an uncharacterized protein from Enterobacteria phage T4 (Bacteriophage T4).